The chain runs to 93 residues: Small ribosomal subunit protein bS18c (93 aa).

It belongs to the bacterial ribosomal protein bS18 family. As to quaternary structure, part of the 30S ribosomal subunit.

It localises to the plastid. The protein localises to the chloroplast. The polypeptide is Small ribosomal subunit protein bS18c (Pinus koraiensis (Korean pine)).